Reading from the N-terminus, the 270-residue chain is Inositol monophosphatase (270 aa).

The Mg(2+) site is built by Glu-71, Asp-91, Leu-93, and Asp-94. Glu-71 provides a ligand contact to substrate. Substrate-binding positions include 93–96 (LDGT), 194–196 (GSC), Glu-213, and Asp-221. Mg(2+) is bound at residue Asp-221.

Belongs to the inositol monophosphatase superfamily. It depends on Mg(2+) as a cofactor.

It carries out the reaction a myo-inositol phosphate + H2O = myo-inositol + phosphate. It participates in polyol metabolism; myo-inositol biosynthesis; myo-inositol from D-glucose 6-phosphate: step 2/2. Inhibited by Li(+). Responsible for the provision of inositol required for synthesis of phosphatidylinositol and polyphosphoinositides. The chain is Inositol monophosphatase (IMP1) from Mesembryanthemum crystallinum (Common ice plant).